A 338-amino-acid polypeptide reads, in one-letter code: Glycerol-3-phosphate dehydrogenase [NAD(P)+] (338 aa).

The NADPH site is built by S13, W14, and K108. The sn-glycerol 3-phosphate site is built by K108, G139, and S141. A143 is a binding site for NADPH. The sn-glycerol 3-phosphate site is built by K194, D247, S257, R258, and N259. Residue K194 is the Proton acceptor of the active site. Position 258 (R258) interacts with NADPH. Residues V282 and E284 each coordinate NADPH.

The protein resides in the cytoplasm. The enzyme catalyses sn-glycerol 3-phosphate + NAD(+) = dihydroxyacetone phosphate + NADH + H(+). It catalyses the reaction sn-glycerol 3-phosphate + NADP(+) = dihydroxyacetone phosphate + NADPH + H(+). The protein operates within membrane lipid metabolism; glycerophospholipid metabolism. Its function is as follows. Catalyzes the reduction of the glycolytic intermediate dihydroxyacetone phosphate (DHAP) to sn-glycerol 3-phosphate (G3P), the key precursor for phospholipid synthesis. This Streptococcus pyogenes serotype M6 (strain ATCC BAA-946 / MGAS10394) protein is Glycerol-3-phosphate dehydrogenase [NAD(P)+].